The primary structure comprises 537 residues: Chaperonin GroEL (537 aa).

ATP is bound by residues 29 to 32 (TLGP), 86 to 90 (DGTTT), glycine 413, and aspartate 492.

Belongs to the chaperonin (HSP60) family. Forms a cylinder of 14 subunits composed of two heptameric rings stacked back-to-back. Interacts with the co-chaperonin GroES.

It is found in the cytoplasm. It catalyses the reaction ATP + H2O + a folded polypeptide = ADP + phosphate + an unfolded polypeptide.. In terms of biological role, together with its co-chaperonin GroES, plays an essential role in assisting protein folding. The GroEL-GroES system forms a nano-cage that allows encapsulation of the non-native substrate proteins and provides a physical environment optimized to promote and accelerate protein folding. The chain is Chaperonin GroEL from Dehalococcoides mccartyi (strain ATCC BAA-2100 / JCM 16839 / KCTC 5957 / BAV1).